Reading from the N-terminus, the 82-residue chain is Sec-independent protein translocase protein TatA (82 aa).

The helical transmembrane segment at methionine 1–glycine 21 threads the bilayer. A disordered region spans residues glycine 43 to glycine 82.

Belongs to the TatA/E family. As to quaternary structure, the Tat system comprises two distinct complexes: a TatABC complex, containing multiple copies of TatA, TatB and TatC subunits, and a separate TatA complex, containing only TatA subunits. Substrates initially bind to the TatABC complex, which probably triggers association of the separate TatA complex to form the active translocon.

It is found in the cell inner membrane. Functionally, part of the twin-arginine translocation (Tat) system that transports large folded proteins containing a characteristic twin-arginine motif in their signal peptide across membranes. TatA could form the protein-conducting channel of the Tat system. This chain is Sec-independent protein translocase protein TatA, found in Methylocella silvestris (strain DSM 15510 / CIP 108128 / LMG 27833 / NCIMB 13906 / BL2).